The following is a 174-amino-acid chain: Adenylate kinase (174 aa).

Residues 12–41 (STGDMLRAAIKAGTLLGLEAKKIIDEGGLV) form an NMP region. Residues Thr-13, Arg-18, 39 to 41 (GLV), 67 to 70 (GFPR), and Gln-74 contribute to the AMP site. The interval 104–141 (GRRVHLASGRTYHVTYNPPKVEGKDDVTGEDLIQRDDD) is LID. ATP-binding positions include Arg-105 and 114–115 (TY). Residues Arg-138 and Arg-149 each contribute to the AMP site.

It belongs to the adenylate kinase family. As to quaternary structure, monomer.

It localises to the cytoplasm. The enzyme catalyses AMP + ATP = 2 ADP. It functions in the pathway purine metabolism; AMP biosynthesis via salvage pathway; AMP from ADP: step 1/1. Catalyzes the reversible transfer of the terminal phosphate group between ATP and AMP. Plays an important role in cellular energy homeostasis and in adenine nucleotide metabolism. The chain is Adenylate kinase from Neisseria polysaccharea.